Consider the following 252-residue polypeptide: Probable transcriptional regulatory protein Ava_1228 (252 aa).

It belongs to the TACO1 family.

Its subcellular location is the cytoplasm. The chain is Probable transcriptional regulatory protein Ava_1228 from Trichormus variabilis (strain ATCC 29413 / PCC 7937) (Anabaena variabilis).